Here is a 198-residue protein sequence, read N- to C-terminus: 7-methyl-GTP pyrophosphatase (198 aa).

Asp-69 (proton acceptor) is an active-site residue.

This sequence belongs to the Maf family. YceF subfamily. A divalent metal cation serves as cofactor.

It localises to the cytoplasm. The enzyme catalyses N(7)-methyl-GTP + H2O = N(7)-methyl-GMP + diphosphate + H(+). Functionally, nucleoside triphosphate pyrophosphatase that hydrolyzes 7-methyl-GTP (m(7)GTP). May have a dual role in cell division arrest and in preventing the incorporation of modified nucleotides into cellular nucleic acids. The protein is 7-methyl-GTP pyrophosphatase of Yersinia pseudotuberculosis serotype I (strain IP32953).